Consider the following 343-residue polypeptide: MQLNDFDYYLPTELIAQQPAQNRDASRLMTLDRVNGELNETIISEIAALFRDGDLLVINDTRVIPARLLGKKESGGRVEVFLVRRLLEPGEVWQCLIKASKSPKPGSLIILSEGVVARVLERSELDTWAVSFSPVEGFLDRLERIGSMPLPPYIRRSAGDDDRERYQTVFARAKGAVAAPTAGLHFTDALLQKIRQQGVEIAPLTLHVGLGTFMPVRVDDLKDHRMHREYYFIPEATARAVNARKNDGGRVVALGTTTTRALEHAAAGNGSVQPGEGEADIFICPGYTFKVVDALITNFHLPKSTLLMLVSALAGKDRLFNAYNEAVNRNFRFFSYGDAMFIY.

The protein belongs to the QueA family. As to quaternary structure, monomer.

The protein resides in the cytoplasm. The catalysed reaction is 7-aminomethyl-7-carbaguanosine(34) in tRNA + S-adenosyl-L-methionine = epoxyqueuosine(34) in tRNA + adenine + L-methionine + 2 H(+). It functions in the pathway tRNA modification; tRNA-queuosine biosynthesis. Transfers and isomerizes the ribose moiety from AdoMet to the 7-aminomethyl group of 7-deazaguanine (preQ1-tRNA) to give epoxyqueuosine (oQ-tRNA). The polypeptide is S-adenosylmethionine:tRNA ribosyltransferase-isomerase (Geotalea uraniireducens (strain Rf4) (Geobacter uraniireducens)).